A 255-amino-acid chain; its full sequence is Ribosomal RNA small subunit methyltransferase A (255 aa).

Residues asparagine 12, leucine 14, glycine 39, glutamate 60, aspartate 84, and asparagine 106 each contribute to the S-adenosyl-L-methionine site.

The protein belongs to the class I-like SAM-binding methyltransferase superfamily. rRNA adenine N(6)-methyltransferase family. RsmA subfamily.

The protein resides in the cytoplasm. It carries out the reaction adenosine(1518)/adenosine(1519) in 16S rRNA + 4 S-adenosyl-L-methionine = N(6)-dimethyladenosine(1518)/N(6)-dimethyladenosine(1519) in 16S rRNA + 4 S-adenosyl-L-homocysteine + 4 H(+). Functionally, specifically dimethylates two adjacent adenosines (A1518 and A1519) in the loop of a conserved hairpin near the 3'-end of 16S rRNA in the 30S particle. May play a critical role in biogenesis of 30S subunits. The polypeptide is Ribosomal RNA small subunit methyltransferase A (Janthinobacterium sp. (strain Marseille) (Minibacterium massiliensis)).